We begin with the raw amino-acid sequence, 268 residues long: Basic endochitinase CHB4 (268 aa).

Positions 1-24 are cleaved as a signal peptide; it reads MALTKLSLVLFLCFLGLYSETVKS. The Chitin-binding type-1 domain occupies 25 to 59; that stretch reads QNCGCAPNLCCSQFGYCGSTDAYCGTGCRSGPCRS. 7 cysteine pairs are disulfide-bonded: C27–C35, C29–C41, C34–C48, C52–C57, C92–C137, C150–C159, and C236–C268. The tract at residues 71 to 268 is catalytic; that stretch reads SVGSIVTQAF…GVDPGPNLSC (198 aa). E132 functions as the Proton donor in the catalytic mechanism. An N-linked (GlcNAc...) asparagine glycan is attached at N265.

Belongs to the glycosyl hydrolase 19 family. Chitinase class I subfamily.

It is found in the secreted. The protein localises to the extracellular space. The catalysed reaction is Random endo-hydrolysis of N-acetyl-beta-D-glucosaminide (1-&gt;4)-beta-linkages in chitin and chitodextrins.. Functionally, defense against chitin-containing fungal pathogens. This is Basic endochitinase CHB4 from Brassica napus (Rape).